We begin with the raw amino-acid sequence, 153 residues long: Small ribosomal subunit protein uS7c (153 aa).

This sequence belongs to the universal ribosomal protein uS7 family. Part of the 30S ribosomal subunit.

Its subcellular location is the plastid. Its function is as follows. One of the primary rRNA binding proteins, it binds directly to 16S rRNA where it nucleates assembly of the head domain of the 30S subunit. The sequence is that of Small ribosomal subunit protein uS7c (rps7) from Helicosporidium sp. subsp. Simulium jonesii (Green alga).